The primary structure comprises 165 residues: Transmembrane protein 128 (165 aa).

Transmembrane regions (helical) follow at residues 49–69 (NIHS…VDFF), 81–101 (WFLF…YCIV), 119–139 (LIPI…VALW), and 144–164 (FFTP…TSLL).

It localises to the membrane. This is Transmembrane protein 128 (TMEM128) from Bos taurus (Bovine).